Reading from the N-terminus, the 285-residue chain is Chromatin modification-related protein YNG2 (285 aa).

Disordered stretches follow at residues 1–24 and 155–201; these read MSFE…SNLK and RTVA…GANF. Positions 8 to 24 are enriched in polar residues; the sequence is DPSSALEQATQDVSNLK. Residues 10 to 36 are a coiled coil; it reads SSALEQATQDVSNLKSESRFLLEEIRA. The PHD-type zinc finger occupies 224–273; the sequence is QLYCFCQSVSYGEMVACDGPNCKYEWFHYGCVNLDEPPKGQWYCPECRQE. Residues Cys227, Cys229, Cys240, Cys245, His251, Cys254, Cys267, and Cys270 each contribute to the Zn(2+) site.

The protein belongs to the ING family. Interacts with H3K4me3 and to a lesser extent with H3K4me2. Component of the NuA4 histone acetyltransferase complex.

The protein localises to the nucleus. In terms of biological role, component of the NuA4 histone acetyltransferase complex which is involved in transcriptional activation of selected genes principally by acetylation of nucleosomal histone H4 and H2A. The NuA4 complex is also involved in DNA repair. Involved in cell cycle progression and meiosis. The chain is Chromatin modification-related protein YNG2 (YNG2) from Eremothecium gossypii (strain ATCC 10895 / CBS 109.51 / FGSC 9923 / NRRL Y-1056) (Yeast).